Consider the following 951-residue polypeptide: Glycine dehydrogenase (decarboxylating) 1 (951 aa).

Lys-703 carries the post-translational modification N6-(pyridoxal phosphate)lysine.

It belongs to the GcvP family. As to quaternary structure, the glycine cleavage system is composed of four proteins: P, T, L and H. The cofactor is pyridoxal 5'-phosphate.

The enzyme catalyses N(6)-[(R)-lipoyl]-L-lysyl-[glycine-cleavage complex H protein] + glycine + H(+) = N(6)-[(R)-S(8)-aminomethyldihydrolipoyl]-L-lysyl-[glycine-cleavage complex H protein] + CO2. The glycine cleavage system catalyzes the degradation of glycine. The P protein binds the alpha-amino group of glycine through its pyridoxal phosphate cofactor; CO(2) is released and the remaining methylamine moiety is then transferred to the lipoamide cofactor of the H protein. The sequence is that of Glycine dehydrogenase (decarboxylating) 1 (gcvP1) from Pseudomonas putida (strain ATCC 47054 / DSM 6125 / CFBP 8728 / NCIMB 11950 / KT2440).